A 490-amino-acid polypeptide reads, in one-letter code: ATP synthase subunit beta, chloroplastic (490 aa).

170 to 177 (GGAGVGKT) provides a ligand contact to ATP.

Belongs to the ATPase alpha/beta chains family. F-type ATPases have 2 components, CF(1) - the catalytic core - and CF(0) - the membrane proton channel. CF(1) has five subunits: alpha(3), beta(3), gamma(1), delta(1), epsilon(1). CF(0) has four main subunits: a(1), b(1), b'(1) and c(9-12).

The protein resides in the plastid. It is found in the chloroplast thylakoid membrane. It carries out the reaction ATP + H2O + 4 H(+)(in) = ADP + phosphate + 5 H(+)(out). Produces ATP from ADP in the presence of a proton gradient across the membrane. The catalytic sites are hosted primarily by the beta subunits. The chain is ATP synthase subunit beta, chloroplastic from Convolvulus arvensis (Field bindweed).